Reading from the N-terminus, the 231-residue chain is Uracil-DNA glycosylase (231 aa).

Aspartate 70 serves as the catalytic Proton acceptor.

The protein belongs to the uracil-DNA glycosylase (UDG) superfamily. UNG family.

Its subcellular location is the cytoplasm. The catalysed reaction is Hydrolyzes single-stranded DNA or mismatched double-stranded DNA and polynucleotides, releasing free uracil.. Functionally, excises uracil residues from the DNA which can arise as a result of misincorporation of dUMP residues by DNA polymerase or due to deamination of cytosine. This chain is Uracil-DNA glycosylase, found in Campylobacter curvus (strain 525.92).